The primary structure comprises 234 residues: Coiled-coil domain-containing protein 194 (234 aa).

Residues 1-42 form the signal peptide; sequence MAEPGPEPGRAWRVLALCGVAVFLAAAAAGGALVAWNLAASA. Disordered stretches follow at residues 44–67 and 187–234; these read RGPR…PGVD and VLEA…RARG. A coiled-coil region spans residues 66–163; it reads VDDLRRRLAE…TRRLDEALRR (98 aa). Positions 187 to 196 are enriched in low complexity; that stretch reads VLEAEMSPQR. A compositionally biased stretch (basic residues) spans 197-217; that stretch reads RVPRPRPRSGSRPRPSPRSRS.

The polypeptide is Coiled-coil domain-containing protein 194 (Homo sapiens (Human)).